The following is a 114-amino-acid chain: Phosphoribosyl-AMP cyclohydrolase (114 aa).

Aspartate 80 serves as a coordination point for Mg(2+). Cysteine 81 is a Zn(2+) binding site. The Mg(2+) site is built by aspartate 82 and aspartate 84. Residues cysteine 97 and cysteine 104 each contribute to the Zn(2+) site.

This sequence belongs to the PRA-CH family. In terms of assembly, homodimer. Mg(2+) is required as a cofactor. It depends on Zn(2+) as a cofactor.

Its subcellular location is the cytoplasm. The catalysed reaction is 1-(5-phospho-beta-D-ribosyl)-5'-AMP + H2O = 1-(5-phospho-beta-D-ribosyl)-5-[(5-phospho-beta-D-ribosylamino)methylideneamino]imidazole-4-carboxamide. Its pathway is amino-acid biosynthesis; L-histidine biosynthesis; L-histidine from 5-phospho-alpha-D-ribose 1-diphosphate: step 3/9. Functionally, catalyzes the hydrolysis of the adenine ring of phosphoribosyl-AMP. The chain is Phosphoribosyl-AMP cyclohydrolase from Rhodococcus jostii (strain RHA1).